Here is a 552-residue protein sequence, read N- to C-terminus: Macrophage colony-stimulating factor 1 (552 aa).

The N-terminal stretch at 1 to 32 (MTARGAAGRCPSSTWLGSRLLLVCLLMSRSIA) is a signal peptide. The Extracellular segment spans residues 33-492 (KEVSEHCSHM…EGSSDPQIPE (460 aa)). Disulfide bonds link C39–C122, C80–C171, and C134–C178. Residues N107, N154, and N172 are each glycosylated (N-linked (GlcNAc...) asparagine). Residues 197-207 (TPSSDPASASP) are compositionally biased toward low complexity. The disordered stretch occupies residues 197–293 (TPSSDPASAS…GGPVPGVEDI (97 aa)). The span at 254-267 (PRSTCQTLESTEQP) shows a compositional bias: polar residues. The segment covering 268-278 (NHGDRLTEDSQ) has biased composition (basic and acidic residues). S308 carries O-linked (Xyl...) (chondroitin sulfate) serine glycosylation. Disordered stretches follow at residues 321–412 (KFSP…RVSN) and 439–465 (GKRSTRDRRSPAELEGGSASEGAARPV). Basic and acidic residues-rich tracts occupy residues 350 to 364 (STEDQKPVDITDRPL), 382 to 396 (EKTDGTSTLREDHQE), and 439 to 450 (GKRSTRDRRSPA). T360 carries O-linked (GalNAc...) threonine glycosylation. The chain crosses the membrane as a helical span at residues 493-515 (SVFHLLVPGIILVLLTVGGLLFY). Topologically, residues 516 to 552 (KWKWRSHRDPQTLDSSVGRPEDSSLTQDEDRQVELPV) are cytoplasmic. The disordered stretch occupies residues 525–552 (PQTLDSSVGRPEDSSLTQDEDRQVELPV). Over residues 543 to 552 (DEDRQVELPV) the composition is skewed to basic and acidic residues.

In terms of assembly, homodimer or heterodimer; disulfide-linked. Likely to exist in multiple forms: homodimer consisting of 2 identical 150-200 kDa proteoglycan subunits, heterodimer consisting of a 150-200 kDa proteoglycan subunit and a truncated 43 kDa subunit, and homodimer consisting of 2 identical 43 kDa subunits. Interacts with CSF1R. In terms of processing, N-glycosylated. O-glycosylated; contains chondroitin sulfate.

The protein localises to the cell membrane. The protein resides in the secreted. It localises to the extracellular space. Cytokine that plays an essential role in the regulation of survival, proliferation and differentiation of hematopoietic precursor cells, especially mononuclear phagocytes, such as macrophages and monocytes. Promotes the release of pro-inflammatory chemokines, and thereby plays an important role in innate immunity and in inflammatory processes. Plays an important role in the regulation of osteoclast proliferation and differentiation, the regulation of bone resorption, and is required for normal bone development. Required for normal male and female fertility. Promotes reorganization of the actin cytoskeleton, regulates formation of membrane ruffles, cell adhesion and cell migration. Plays a role in lipoprotein clearance. This is Macrophage colony-stimulating factor 1 (Csf1) from Mus musculus (Mouse).